Reading from the N-terminus, the 122-residue chain is Ribonuclease P protein component (122 aa).

It belongs to the RnpA family. Consists of a catalytic RNA component (M1 or rnpB) and a protein subunit.

It carries out the reaction Endonucleolytic cleavage of RNA, removing 5'-extranucleotides from tRNA precursor.. In terms of biological role, RNaseP catalyzes the removal of the 5'-leader sequence from pre-tRNA to produce the mature 5'-terminus. It can also cleave other RNA substrates such as 4.5S RNA. The protein component plays an auxiliary but essential role in vivo by binding to the 5'-leader sequence and broadening the substrate specificity of the ribozyme. The sequence is that of Ribonuclease P protein component from Lactobacillus gasseri (strain ATCC 33323 / DSM 20243 / BCRC 14619 / CIP 102991 / JCM 1131 / KCTC 3163 / NCIMB 11718 / NCTC 13722 / AM63).